The sequence spans 109 residues: Putative membrane protein insertion efficiency factor (109 aa).

It belongs to the UPF0161 family.

It localises to the cell inner membrane. In terms of biological role, could be involved in insertion of integral membrane proteins into the membrane. The chain is Putative membrane protein insertion efficiency factor from Rhodopseudomonas palustris (strain BisB18).